The primary structure comprises 297 residues: tRNA-cytidine(32) 2-sulfurtransferase (297 aa).

The short motif at 61-66 is the PP-loop motif element; the sequence is SGGKDS. Residues cysteine 136, cysteine 139, and cysteine 227 each contribute to the [4Fe-4S] cluster site.

Belongs to the TtcA family. In terms of assembly, homodimer. Mg(2+) is required as a cofactor. It depends on [4Fe-4S] cluster as a cofactor.

It localises to the cytoplasm. It carries out the reaction cytidine(32) in tRNA + S-sulfanyl-L-cysteinyl-[cysteine desulfurase] + AH2 + ATP = 2-thiocytidine(32) in tRNA + L-cysteinyl-[cysteine desulfurase] + A + AMP + diphosphate + H(+). It participates in tRNA modification. In terms of biological role, catalyzes the ATP-dependent 2-thiolation of cytidine in position 32 of tRNA, to form 2-thiocytidine (s(2)C32). The sulfur atoms are provided by the cysteine/cysteine desulfurase (IscS) system. The sequence is that of tRNA-cytidine(32) 2-sulfurtransferase from Paracoccus denitrificans (strain Pd 1222).